Reading from the N-terminus, the 256-residue chain is Phosphatidylglycerol--prolipoprotein diacylglyceryl transferase (256 aa).

The next 3 membrane-spanning stretches (helical) occupy residues 19–39 (VHWYGLMYLIGFVGAWLLGYW), 56–76 (LIFYSALGVILGGRVGYMLFY), and 91–111 (IWEGGMSFHGGLLGVVIAAWL). Arg-139 contributes to the a 1,2-diacyl-sn-glycero-3-phospho-(1'-sn-glycerol) binding site. The chain crosses the membrane as a helical span at residues 231 to 251 (FGWLTMGQVLSIPMLLIGIWL).

This sequence belongs to the Lgt family.

Its subcellular location is the cell inner membrane. The catalysed reaction is L-cysteinyl-[prolipoprotein] + a 1,2-diacyl-sn-glycero-3-phospho-(1'-sn-glycerol) = an S-1,2-diacyl-sn-glyceryl-L-cysteinyl-[prolipoprotein] + sn-glycerol 1-phosphate + H(+). It participates in protein modification; lipoprotein biosynthesis (diacylglyceryl transfer). Functionally, catalyzes the transfer of the diacylglyceryl group from phosphatidylglycerol to the sulfhydryl group of the N-terminal cysteine of a prolipoprotein, the first step in the formation of mature lipoproteins. The polypeptide is Phosphatidylglycerol--prolipoprotein diacylglyceryl transferase (Legionella pneumophila subsp. pneumophila (strain Philadelphia 1 / ATCC 33152 / DSM 7513)).